A 714-amino-acid chain; its full sequence is Polynucleotide 5'-hydroxyl-kinase NOL9 (714 aa).

A2 carries the post-translational modification N-acetylalanine. Residues 31–47 (RRGRRRFGVLTRVELRR) carry the Nucleolar localization signal motif. The tract at residues 80 to 133 (ARSRPAPRSPPTPSVPPAPCTASATCSLLNPRNHSTPQSRAGRPVRKVSPNVTQ) is disordered. The span at 86 to 98 (PRSPPTPSVPPAP) shows a compositional bias: pro residues. Residues 107–118 (LLNPRNHSTPQS) show a composition bias toward polar residues. Phosphoserine is present on S128. Residue 322 to 329 (GACDIGKS) coordinates ATP. Residues 495–714 (FTYEEKESSP…PRHKLRQRRK (220 aa)) form an interaction with LAS1L region. K500 participates in a covalent cross-link: Glycyl lysine isopeptide (Lys-Gly) (interchain with G-Cter in SUMO2). At S502 the chain carries Phosphoserine.

It belongs to the Clp1 family. NOL9/GRC3 subfamily. In terms of assembly, interacts with PELP1, WDR18 and SENP3. Interacts with LAS1L to form an ITS2 pre-rRNA endonuclease-kinase complex.

It is found in the nucleus. The protein resides in the nucleolus. It carries out the reaction a 5'-end dephospho-2'-deoxyribonucleoside-DNA + ATP = a 5'-end 5'-phospho-2'-deoxyribonucleoside-DNA + ADP + H(+). It catalyses the reaction a 5'-end dephospho-ribonucleoside-RNA + ATP = a 5'-end 5'-phospho-ribonucleoside-RNA + ADP + H(+). Functionally, polynucleotide kinase that can phosphorylate the 5'-hydroxyl groups of single-stranded and double-stranded RNA and DNA substrates. Involved in rRNA processing and its kinase activity is required for the processing of the 32S precursor into 5.8S and 28S rRNAs, more specifically for the generation of the major 5.8S(S) form. Required for the efficient pre-rRNA processing of internal transcribed spacer 2 (ITS2). Associates with LAS1L to form an ITS2 pre-rRNA endonuclease-kinase complex and is responsible for the transport of this complex into the nucleolus. The sequence is that of Polynucleotide 5'-hydroxyl-kinase NOL9 from Mus musculus (Mouse).